The following is a 227-amino-acid chain: Uracil-DNA glycosylase (227 aa).

The active-site Proton acceptor is D65.

The protein belongs to the uracil-DNA glycosylase (UDG) superfamily. UNG family.

The protein localises to the cytoplasm. The catalysed reaction is Hydrolyzes single-stranded DNA or mismatched double-stranded DNA and polynucleotides, releasing free uracil.. Its function is as follows. Excises uracil residues from the DNA which can arise as a result of misincorporation of dUMP residues by DNA polymerase or due to deamination of cytosine. The sequence is that of Uracil-DNA glycosylase from Bacillus velezensis (strain DSM 23117 / BGSC 10A6 / LMG 26770 / FZB42) (Bacillus amyloliquefaciens subsp. plantarum).